Reading from the N-terminus, the 622-residue chain is Threonine--tRNA ligase (622 aa).

The interval 1 to 141 (MKTLLIHSDY…SRKITTERKE (141 aa)) is editing domain. The interval 199-498 (PHVKYIKEKE…TLENKPPALP (300 aa)) is catalytic. Residues Cys-291, His-343, and His-467 each coordinate Zn(2+).

Belongs to the class-II aminoacyl-tRNA synthetase family. In terms of assembly, homodimer. Zn(2+) serves as cofactor.

It is found in the cytoplasm. It carries out the reaction tRNA(Thr) + L-threonine + ATP = L-threonyl-tRNA(Thr) + AMP + diphosphate + H(+). Catalyzes the attachment of threonine to tRNA(Thr) in a two-step reaction: L-threonine is first activated by ATP to form Thr-AMP and then transferred to the acceptor end of tRNA(Thr). Also edits incorrectly charged L-seryl-tRNA(Thr). This is Threonine--tRNA ligase from Methanococcus maripaludis (strain C5 / ATCC BAA-1333).